The following is a 143-amino-acid chain: Class II hydrophobin qid3 (143 aa).

An N-terminal signal peptide occupies residues 1–17 (MKFLTVAAVFFTAVLAA). Residues 20-37 (NYPPPPPPTYAPPPPTYT) are compositionally biased toward pro residues. The interval 20–67 (NYPPPPPPTYAPPPPTYTLPPNGNGGGNGNGNGNGNGGGNGNGNGNTN) is disordered. A run of 10 repeats spans residues 41 to 42 (NG), 43 to 44 (NG), 47 to 48 (NG), 49 to 50 (NG), 51 to 52 (NG), 53 to 54 (NG), 55 to 56 (NG), 59 to 60 (NG), 61 to 62 (NG), and 63 to 64 (NG). The 10 X 2 AA repeats of N-G stretch occupies residues 41-64 (NGNGGGNGNGNGNGNGGGNGNGNG). Residues 42–63 (GNGGGNGNGNGNGNGGGNGNGN) are compositionally biased toward gly residues. Intrachain disulfides connect Cys74–Cys124, Cys85–Cys97, and Cys125–Cys136.

The protein belongs to the cerato-ulmin hydrophobin family. In terms of assembly, homotetramer. Further self-assembles to form highly ordered films at water-air interfaces through intermolecular interactions.

Its subcellular location is the secreted. The protein localises to the cell wall. Functionally, aerial growth, conidiation, and dispersal of filamentous fungi in the environment rely upon a capability of their secreting small amphipathic proteins called hydrophobins (HPBs) with low sequence identity. Class I can self-assemble into an outermost layer of rodlet bundles on aerial cell surfaces, conferring cellular hydrophobicity that supports fungal growth, development and dispersal; whereas Class II form highly ordered films at water-air interfaces through intermolecular interactions but contribute nothing to the rodlet structure. Qid3 is a class II hydrophobin that might acts as a chitinase inhibitor at the cell surface that blocks the degradation of the chitin rings localized in the budding region of dividing cells. In Trichoderma harzianum (Hypocrea lixii), this protein is Class II hydrophobin qid3.